We begin with the raw amino-acid sequence, 928 residues long: MLLRLLSCCCWLLCSLRSSWASRNDKCGDTIKITSPSYLTSAGYPHSYPPSQRCEWLIQAPEHYQRIMINFNPHFDLEDRECKYDYVEVIDGDNANGQLLGKYCGKIAPSPLVSTGPSIFIRFVSDYETPGAGFSIRYEVFKTGPECSRNFTSSNGVIKSPKYPEKYPNALECTYIIFAPKMQEIVLEFESFELEADSNAPGGQTCRYDWLGIWDGFPGVGPHIGRYCGQNTPGRVRSFTGILSMIFHTDSAIAKEGFFANFSVVQSNTDEDFQCKEALGMESGEIHFDQISVSSQYSMNWSAERSRLNYVENGWTPGEDTVKEWIQVDLENLRFVSGIGTQGAISKETKKKYFVKSYKVDISSNGEDWITLKDGNKHLVFTGNTDATDVVYRPFSKPVITRFVRLRPVTWENGISLRFELYGCKITDYPCSRMLGMVSGLISDSQITASSQVDRNWVPELARLVTSRSGWALPPSNTHPYTKEWLQIDLAEEKIVRGVIIQGGKHKENKVFMRKFKIGYSNNGTEWEMIMDSSKNKPKTFEGNTNYDTPELRTFAHITTGFIRIIPERASASGLALRLELLGCEVETPTSIPTTPEVNGGDECEGDLANCHSGTDEGFKLTVGATGQSTETPTVEASPEEPDMTHSDLDCKFGWGSQKTVCNWQHDISSDLKWAVLNSKTGPVQDHTGDGNFIYSEADERHEGRAARLMSPVVSSSRSAHCLTFWYHMDGSHVGTLSIKLKYEMEEDFDQTLWTVSGNQGDQWKEARVVLHKTMKQYQVIVEGTVGKGSAGGIAVDDIIIANHISPSQCRAPEIDDSANKIGEEDSEIDKTGSTPNYALNEFNESISKKPGNVLKTLDPILITIIAMSALGVLLGAICGVVLYCACWHNGMSERNLSALENYNFELVDGVKLKKDKLNTQNSYSEAS.

An N-terminal signal peptide occupies residues 1–21 (MLLRLLSCCCWLLCSLRSSWA). The Extracellular segment spans residues 22-860 (SRNDKCGDTI…PGNVLKTLDP (839 aa)). Disulfide bonds link Cys27–Cys54, Cys82–Cys104, and Cys147–Cys173. CUB domains follow at residues 27 to 141 (CGDT…YEVF) and 147 to 265 (CSRN…FSVV). Asn150 carries N-linked (GlcNAc...) asparagine glycosylation. Ca(2+) is bound by residues Glu195, Asp209, and Asp250. A disulfide bond links Cys206 and Cys228. N-linked (GlcNAc...) asparagine glycosylation is found at Asn261, Asn300, and Asn523. Cystine bridges form between Cys275–Cys424 and Cys431–Cys584. F5/8 type C domains follow at residues 275–424 (CKEA…LYGC) and 431–584 (CSRM…LLGC). Ser613 carries O-linked (Xyl...) (chondroitin sulfate) serine; alternate glycosylation. O-linked (Xyl...) (heparan sulfate) serine; alternate glycosylation is present at Ser613. Residues 624–645 (GATGQSTETPTVEASPEEPDMT) form a disordered region. Polar residues predominate over residues 625–635 (ATGQSTETPTV). One can recognise an MAM domain in the interval 646 to 812 (HSDLDCKFGW…NHISPSQCRA (167 aa)). Ser834 is a glycosylation site (O-linked (Xyl...) (chondroitin sulfate) serine). Asn844 is a glycosylation site (N-linked (GlcNAc...) asparagine). A helical transmembrane segment spans residues 861 to 883 (ILITIIAMSALGVLLGAICGVVL). At 884 to 928 (YCACWHNGMSERNLSALENYNFELVDGVKLKKDKLNTQNSYSEAS) the chain is on the cytoplasmic side.

This sequence belongs to the neuropilin family. As to quaternary structure, homodimer, and heterodimer. Retinal ganglion cells and visual center neurons.

The protein localises to the mitochondrion membrane. The protein resides in the cell membrane. Its function is as follows. Receptor involved in the development of the cardiovascular system, in angiogenesis, in the formation of certain neuronal circuits and in organogenesis outside the nervous system. Mediates the chemorepulsant activity of semaphorins. Binding to VEGFA initiates a signaling pathway needed for motor neuron axon guidance and cell body migration, including for the caudal migration of facial motor neurons from rhombomere 4 to rhombomere 6 during embryonic development. Regulates mitochondrial iron transport via interaction. The polypeptide is Neuropilin-1 (nrp1) (Xenopus laevis (African clawed frog)).